Consider the following 368-residue polypeptide: Aspartate-semialdehyde dehydrogenase (368 aa).

Residues R10–V13, T37–S38, and Q72 contribute to the NADP(+) site. A phosphate-binding site is contributed by R101. The Acyl-thioester intermediate role is filled by C134. Residues S160–G161 and P191 each bind NADP(+). E239 serves as a coordination point for substrate. K242 contributes to the phosphate binding site. R266 contacts substrate. Catalysis depends on H273, which acts as the Proton acceptor. Residue Q349 coordinates NADP(+).

This sequence belongs to the aspartate-semialdehyde dehydrogenase family. As to quaternary structure, homodimer.

The catalysed reaction is L-aspartate 4-semialdehyde + phosphate + NADP(+) = 4-phospho-L-aspartate + NADPH + H(+). The protein operates within amino-acid biosynthesis; L-lysine biosynthesis via DAP pathway; (S)-tetrahydrodipicolinate from L-aspartate: step 2/4. It participates in amino-acid biosynthesis; L-methionine biosynthesis via de novo pathway; L-homoserine from L-aspartate: step 2/3. It functions in the pathway amino-acid biosynthesis; L-threonine biosynthesis; L-threonine from L-aspartate: step 2/5. Catalyzes the NADPH-dependent formation of L-aspartate-semialdehyde (L-ASA) by the reductive dephosphorylation of L-aspartyl-4-phosphate. This chain is Aspartate-semialdehyde dehydrogenase, found in Azotobacter vinelandii.